We begin with the raw amino-acid sequence, 347 residues long: tRNA N6-adenosine threonylcarbamoyltransferase (347 aa).

The Fe cation site is built by His-111 and His-115. Substrate is bound by residues 134–138, Asp-167, Gly-180, and Asn-277; that span reads LISGG. Fe cation is bound at residue Asp-305.

Belongs to the KAE1 / TsaD family. Fe(2+) is required as a cofactor.

The protein localises to the cytoplasm. It catalyses the reaction L-threonylcarbamoyladenylate + adenosine(37) in tRNA = N(6)-L-threonylcarbamoyladenosine(37) in tRNA + AMP + H(+). Its function is as follows. Required for the formation of a threonylcarbamoyl group on adenosine at position 37 (t(6)A37) in tRNAs that read codons beginning with adenine. Is involved in the transfer of the threonylcarbamoyl moiety of threonylcarbamoyl-AMP (TC-AMP) to the N6 group of A37, together with TsaE and TsaB. TsaD likely plays a direct catalytic role in this reaction. This is tRNA N6-adenosine threonylcarbamoyltransferase from Actinobacillus pleuropneumoniae serotype 5b (strain L20).